The primary structure comprises 588 residues: Vesicular glutamate transporter 3 (588 aa).

Residues 1 to 76 are Cytoplasmic-facing; that stretch reads MPFNAFDTFK…CSCCGIPKRY (76 aa). A helical transmembrane segment spans residues 77-97; it reads IIAVMSGLGFCISFGIRCNLG. The Vesicular portion of the chain corresponds to 98–130; it reads VAIVEMVNNSTVYVDGKPEIQTAQFNWDPETVG. N-linked (GlcNAc...) asparagine glycosylation is present at asparagine 106. The helical transmembrane segment at 131 to 151 threads the bilayer; that stretch reads LIHGSFFWGYIVTQIPGGFIS. Residues 152–153 are Cytoplasmic-facing; sequence NK. Residues 154-174 form a helical membrane-spanning segment; the sequence is FAANRVFGAAIFLTSTLNMFI. Topologically, residues 175 to 182 are vesicular; the sequence is PSAARVHY. Residues 183 to 203 form a helical membrane-spanning segment; sequence GCVMCVRILQGLVEGVTYPAC. The Cytoplasmic segment spans residues 204-221; that stretch reads HGMWSKWAPPLERSRLAT. Residues 222–242 form a helical membrane-spanning segment; that stretch reads TSFCGSYAGAVVAMPLAGVLV. The Vesicular segment spans residues 243-249; sequence QYIGWAS. A helical membrane pass occupies residues 250-270; it reads VFYIYGMFGIIWYMFWLLQAY. Residues 271-314 lie on the Cytoplasmic side of the membrane; the sequence is ECPAVHPTISNEERTYIETSIGEGANLASLSKFNTPWRRFFTSL. Residues 315–335 traverse the membrane as a helical segment; sequence PVYAIIVANFCRSWTFYLLLI. The Vesicular segment spans residues 336 to 353; that stretch reads SQPAYFEEVFGFAISKVG. A helical membrane pass occupies residues 354-374; that stretch reads LLSAVPHMVMTIVVPIGGQLA. The Cytoplasmic portion of the chain corresponds to 375-390; that stretch reads DYLRSRKILTTTAVRK. A helical transmembrane segment spans residues 391 to 411; the sequence is IMNCGGFGMEATLLLVVGFSH. The Vesicular portion of the chain corresponds to 412-413; that stretch reads TK. A helical membrane pass occupies residues 414–434; it reads GVAISFLVLAVGFSGFAISGF. Residues 435-447 are Cytoplasmic-facing; the sequence is NVNHLDIAPRYAS. The chain crosses the membrane as a helical span at residues 448-468; it reads ILMGISNGVGTLSGMVCPLIV. At 469–481 the chain is on the vesicular side; it reads GAMTKHKTREEWQ. The helical transmembrane segment at 482–502 threads the bilayer; that stretch reads NVFLIAALVHYSGVIFYGVFA. Topologically, residues 503 to 585 are cytoplasmic; sequence SGEKQDWADP…LSYQNEEDFS (83 aa). Positions 539–588 are disordered; that stretch reads FVSPRKKMSYGATTQNCEVQKTDRRQQRESAFEGEEPLSYQNEEDFSETS. A compositionally biased stretch (basic and acidic residues) spans 558–569; it reads QKTDRRQQRESA. The span at 570–588 shows a compositional bias: acidic residues; that stretch reads FEGEEPLSYQNEEDFSETS.

It belongs to the major facilitator superfamily. Sodium/anion cotransporter family. VGLUT subfamily. Expressed in brain, kidney and liver. Expressed within the amygdala, brainstem, cerberal cortex, dorsal root ganglia, dorsal spinal cord, hippocampus, hypothalamus, retina, striatum and ventral spinal cord. Expressed within neurons of the caudate-putamen, olfactory tubercle, nucleus accumbens, hippocampus, interpeduncular nucleus and dorsal and medial raphe nuclei. Expressed in inner hair cells of the ear. Expressed at synaptic terminals within the lateral superior olive (LSO), a nucleus of the mammalian sound localization system, and in the medial nucleus of the trapezoid body (MNTB), which provides inhibitory input to the LSO.

It is found in the cytoplasmic vesicle. The protein localises to the secretory vesicle. It localises to the synaptic vesicle membrane. Its subcellular location is the cell membrane. The protein resides in the synapse. It is found in the synaptosome. It carries out the reaction L-glutamate(out) = L-glutamate(in). The enzyme catalyses chloride(in) = chloride(out). The catalysed reaction is 3 Na(+)(out) + phosphate(out) = 3 Na(+)(in) + phosphate(in). The L-glutamate uniporter activity exhibits a biphasic dependence on chloride concentration. Chloride channel activity is allosterically activated by lumenal H(+) and Cl(-) leading to synaptic vesicles acidification. The glutamate transport activity is allosterically activated by lumenal H(+) and Cl(-), preventing non-vesicular L-glutamate release. In terms of biological role, multifunctional transporter that transports L-glutamate as well as multiple ions such as chloride, sodium and phosphate. At the synaptic vesicle membrane, mainly functions as an uniporter that mediates the uptake of L-glutamate into synaptic vesicles at presynaptic nerve terminals of excitatory neural cells. The L-glutamate uniporter activity is electrogenic and is driven by the proton electrochemical gradient, mainly by the electrical gradient established by the vacuolar H(+)-ATPase across the synaptic vesicle membrane. In addition, functions as a chloride channel that allows a chloride permeation through the synaptic vesicle membrane that affects the proton electrochemical gradient and promotes synaptic vesicles acidification. At the plasma membrane, following exocytosis, functions as a symporter of Na(+) and phosphate from the extracellular space to the cytoplasm allowing synaptic phosphate homeostasis regulation. The symporter activity is electrogenic. Moreover, operates synergistically with SLC18A3/VACHT under a constant H(+) gradient, thereby allowing striatal vesicular acetylcholine uptake. This Rattus norvegicus (Rat) protein is Vesicular glutamate transporter 3.